A 355-amino-acid chain; its full sequence is Phosphoribosylformylglycinamidine cyclo-ligase (355 aa).

This sequence belongs to the AIR synthase family.

It is found in the cytoplasm. It catalyses the reaction 2-formamido-N(1)-(5-O-phospho-beta-D-ribosyl)acetamidine + ATP = 5-amino-1-(5-phospho-beta-D-ribosyl)imidazole + ADP + phosphate + H(+). Its pathway is purine metabolism; IMP biosynthesis via de novo pathway; 5-amino-1-(5-phospho-D-ribosyl)imidazole from N(2)-formyl-N(1)-(5-phospho-D-ribosyl)glycinamide: step 2/2. The polypeptide is Phosphoribosylformylglycinamidine cyclo-ligase (Beijerinckia indica subsp. indica (strain ATCC 9039 / DSM 1715 / NCIMB 8712)).